We begin with the raw amino-acid sequence, 256 residues long: Homeobox protein Hox-D13a (256 aa).

Residues 191–250 (GRKKRVPYTKFQLKELEREYNTTKFITKENRRRIASSTNLSERQVTIWFQNRRVKDKKRP) constitute a DNA-binding region (homeobox).

The protein belongs to the Abd-B homeobox family.

Its subcellular location is the nucleus. Functionally, sequence-specific transcription factor which is part of a developmental regulatory system that provides cells with specific positional identities on the anterior-posterior axis. The sequence is that of Homeobox protein Hox-D13a (hoxd13a) from Danio rerio (Zebrafish).